A 294-amino-acid polypeptide reads, in one-letter code: Farnesyl diphosphate synthase (294 aa).

The isopentenyl diphosphate site is built by Lys-45, Arg-48, and His-77. Mg(2+) contacts are provided by Asp-84 and Asp-90. (2E)-geranyl diphosphate is bound at residue Arg-95. Arg-96 contributes to the isopentenyl diphosphate binding site. (2E)-geranyl diphosphate-binding residues include Lys-181, Thr-182, and Gln-220.

Belongs to the FPP/GGPP synthase family. It depends on Mg(2+) as a cofactor.

It localises to the cytoplasm. It carries out the reaction isopentenyl diphosphate + (2E)-geranyl diphosphate = (2E,6E)-farnesyl diphosphate + diphosphate. The sequence is that of Farnesyl diphosphate synthase (ispA) from Buchnera aphidicola subsp. Schizaphis graminum (strain Sg).